Here is a 271-residue protein sequence, read N- to C-terminus: Urease accessory protein UreD (271 aa).

Belongs to the UreD family. UreD, UreF and UreG form a complex that acts as a GTP-hydrolysis-dependent molecular chaperone, activating the urease apoprotein by helping to assemble the nickel containing metallocenter of UreC. The UreE protein probably delivers the nickel.

The protein resides in the cytoplasm. Functionally, required for maturation of urease via the functional incorporation of the urease nickel metallocenter. The polypeptide is Urease accessory protein UreD (Haemophilus influenzae (strain PittEE)).